We begin with the raw amino-acid sequence, 704 residues long: Elongation factor G 2 (704 aa).

The tr-type G domain maps to 8-290; sequence ERYRNIGISA…AIIDYLPSPV (283 aa). GTP is bound by residues 17–24, 88–92, and 142–145; these read AHIDAGKT, DTPGH, and NKMD.

The protein belongs to the TRAFAC class translation factor GTPase superfamily. Classic translation factor GTPase family. EF-G/EF-2 subfamily.

The protein resides in the cytoplasm. Functionally, catalyzes the GTP-dependent ribosomal translocation step during translation elongation. During this step, the ribosome changes from the pre-translocational (PRE) to the post-translocational (POST) state as the newly formed A-site-bound peptidyl-tRNA and P-site-bound deacylated tRNA move to the P and E sites, respectively. Catalyzes the coordinated movement of the two tRNA molecules, the mRNA and conformational changes in the ribosome. The protein is Elongation factor G 2 of Polaromonas sp. (strain JS666 / ATCC BAA-500).